A 91-amino-acid chain; its full sequence is Small ribosomal subunit protein uS15 (91 aa).

The protein belongs to the universal ribosomal protein uS15 family. In terms of assembly, part of the 30S ribosomal subunit. Forms a bridge to the 50S subunit in the 70S ribosome, contacting the 23S rRNA.

Its function is as follows. One of the primary rRNA binding proteins, it binds directly to 16S rRNA where it helps nucleate assembly of the platform of the 30S subunit by binding and bridging several RNA helices of the 16S rRNA. Functionally, forms an intersubunit bridge (bridge B4) with the 23S rRNA of the 50S subunit in the ribosome. The protein is Small ribosomal subunit protein uS15 of Rickettsia akari (strain Hartford).